We begin with the raw amino-acid sequence, 135 residues long: Protein NrdI (135 aa).

Belongs to the NrdI family.

Its function is as follows. Probably involved in ribonucleotide reductase function. The sequence is that of Protein NrdI from Salmonella gallinarum (strain 287/91 / NCTC 13346).